The chain runs to 372 residues: N-methyl-L-tryptophan oxidase (372 aa).

An FAD-binding site is contributed by 4-34 (DLIIIGSGSVGAAAGYYATRAGLNVLMTDAH). Cys-308 is subject to S-8alpha-FAD cysteine.

It belongs to the MSOX/MTOX family. MTOX subfamily. Monomer. The cofactor is FAD.

It carries out the reaction N(alpha)-methyl-L-tryptophan + O2 + H2O = L-tryptophan + formaldehyde + H2O2. Catalyzes the oxidative demethylation of N-methyl-L-tryptophan. This chain is N-methyl-L-tryptophan oxidase, found in Escherichia coli O9:H4 (strain HS).